The chain runs to 3582 residues: Ubiquitin carboxyl-terminal hydrolase 34 (3582 aa).

Phosphoserine occurs at positions 352, 486, 487, and 490. Disordered regions lie at residues Glu-503–Gly-533, Gln-551–Asn-670, Gly-682–Thr-705, His-775–Met-801, and Thr-1496–Glu-1515. Over residues Ala-510–Ser-524 the composition is skewed to low complexity. The span at Ser-560 to Asn-570 shows a compositional bias: polar residues. The span at Ser-571–Ser-590 shows a compositional bias: low complexity. Residues Asn-591–Val-609 are compositionally biased toward polar residues. Positions Gln-610 to Asp-653 are enriched in acidic residues. The span at Ser-684 to Thr-697 shows a compositional bias: polar residues. Basic residues predominate over residues His-775–Asp-798. Over residues Pro-1504–Val-1514 the composition is skewed to acidic residues. Ser-1506 carries the phosphoserine modification. The 346-residue stretch at Val-1931–Met-2276 folds into the USP domain. The Nucleophile role is filled by Cys-1940. His-2201 functions as the Proton acceptor in the catalytic mechanism. Ser-2525 is modified (phosphoserine). Residues Ser-3369–Cys-3484 form a disordered region. The span at Gln-3373–Glu-3384 shows a compositional bias: basic and acidic residues. 2 positions are modified to phosphoserine: Ser-3395 and Ser-3396. The residue at position 3418 (Thr-3418) is a Phosphothreonine. A phosphoserine mark is found at Ser-3423 and Ser-3443. Positions Asp-3463–Cys-3484 are enriched in basic and acidic residues. At Ser-3539 the chain carries Phosphoserine.

This sequence belongs to the peptidase C19 family. As to quaternary structure, interacts with AXIN1 and AXIN2.

The enzyme catalyses Thiol-dependent hydrolysis of ester, thioester, amide, peptide and isopeptide bonds formed by the C-terminal Gly of ubiquitin (a 76-residue protein attached to proteins as an intracellular targeting signal).. Functionally, ubiquitin hydrolase that can remove conjugated ubiquitin from AXIN1 and AXIN2, thereby acting as a regulator of Wnt signaling pathway. Acts as an activator of the Wnt signaling pathway downstream of the beta-catenin destruction complex by deubiquitinating and stabilizing AXIN1 and AXIN2, leading to promote nuclear accumulation of AXIN1 and AXIN2 and positively regulate beta-catenin (CTNBB1)-mediated transcription. Recognizes and hydrolyzes the peptide bond at the C-terminal Gly of ubiquitin. Involved in the processing of poly-ubiquitin precursors as well as that of ubiquitinated proteins. The protein is Ubiquitin carboxyl-terminal hydrolase 34 (Usp34) of Mus musculus (Mouse).